A 239-amino-acid chain; its full sequence is Lipoprotein-releasing system ATP-binding protein LolD (239 aa).

Residues 10–239 (VELSGVRKDY…ADGPHRRSGA (230 aa)) enclose the ABC transporter domain. Residue 46-53 (GPSGSGKS) coordinates ATP.

It belongs to the ABC transporter superfamily. Lipoprotein translocase (TC 3.A.1.125) family. The complex is composed of two ATP-binding proteins (LolD) and two transmembrane proteins (LolC and LolE).

It localises to the cell inner membrane. Its function is as follows. Part of the ABC transporter complex LolCDE involved in the translocation of mature outer membrane-directed lipoproteins, from the inner membrane to the periplasmic chaperone, LolA. Responsible for the formation of the LolA-lipoprotein complex in an ATP-dependent manner. The sequence is that of Lipoprotein-releasing system ATP-binding protein LolD from Anaeromyxobacter dehalogenans (strain 2CP-C).